The sequence spans 87 residues: Phytosulfokines 1 (87 aa).

A signal peptide spans 1–24; sequence MMKTKSEVLIFFFTLVLLLSMASS. The propeptide occupies 25–76; sequence VILREDGFAPPKPSPTTHEKASTKGDRDGVECKNSDSEEECLVKKTVAAHTD. Residues 31 to 59 are disordered; sequence GFAPPKPSPTTHEKASTKGDRDGVECKNS. Basic and acidic residues predominate over residues 41–59; the sequence is THEKASTKGDRDGVECKNS. Sulfotyrosine occurs at positions 77 and 79. The propeptide occupies 82–87; sequence DLNLSP.

This sequence belongs to the phytosulfokine family. In terms of processing, sulfation is important for activity and for the binding to a putative membrane receptor. Post-translationally, PSK-beta is produced from PSK-alpha by exopeptidase digestion. In terms of tissue distribution, expressed only in roots.

The protein resides in the secreted. Functionally, promotes plant cell differentiation, organogenesis and somatic embryogenesis as well as cell proliferation. This chain is Phytosulfokines 1 (PSK1), found in Arabidopsis thaliana (Mouse-ear cress).